A 734-amino-acid polypeptide reads, in one-letter code: Methylcrotonoyl-CoA carboxylase subunit alpha, mitochondrial (734 aa).

The transit peptide at methionine 1–isoleucine 25 directs the protein to the mitochondrion. One can recognise a Biotin carboxylation domain in the interval cysteine 37–serine 484. Residues lysine 152, glutamate 236, and histidine 271 each contribute to the ATP site. One can recognise an ATP-grasp domain in the interval lysine 156–asparagine 354. Mn(2+)-binding residues include glutamate 311, glutamate 325, and asparagine 327. Residue arginine 329 is part of the active site. The residue at position 645 (serine 645) is a Phosphoserine. Residues serine 645–threonine 666 are disordered. Positions serine 657–lysine 733 constitute a Biotinyl-binding domain. Residue lysine 699 is modified to N6-biotinyllysine.

In terms of assembly, probably a heterodimer composed of biotin-containing alpha subunits and beta subunits. Biotin serves as cofactor. Requires Mn(2+) as cofactor. In roots, cotyledons, leaves, flowers, ovaries, siliques and embryos.

The protein resides in the mitochondrion matrix. The catalysed reaction is 3-methylbut-2-enoyl-CoA + hydrogencarbonate + ATP = 3-methyl-(2E)-glutaconyl-CoA + ADP + phosphate + H(+). It participates in amino-acid degradation; L-leucine degradation; (S)-3-hydroxy-3-methylglutaryl-CoA from 3-isovaleryl-CoA: step 2/3. In terms of biological role, biotin-attachment subunit of the 3-methylcrotonyl-CoA carboxylase, an enzyme that catalyzes the conversion of 3-methylcrotonyl-CoA to 3-methylglutaconyl-CoA, a critical step for leucine and isovaleric acid catabolism. In Arabidopsis thaliana (Mouse-ear cress), this protein is Methylcrotonoyl-CoA carboxylase subunit alpha, mitochondrial (MCCA).